The following is a 357-amino-acid chain: Peptide chain release factor 1 (357 aa).

Residue glutamine 232 is modified to N5-methylglutamine. A compositionally biased stretch (basic and acidic residues) spans 284 to 304 (AERAAERKGQIGSGDRSERIR). The tract at residues 284 to 308 (AERAAERKGQIGSGDRSERIRTYNY) is disordered.

This sequence belongs to the prokaryotic/mitochondrial release factor family. In terms of processing, methylated by PrmC. Methylation increases the termination efficiency of RF1.

The protein localises to the cytoplasm. In terms of biological role, peptide chain release factor 1 directs the termination of translation in response to the peptide chain termination codons UAG and UAA. This chain is Peptide chain release factor 1, found in Maricaulis maris (strain MCS10) (Caulobacter maris).